The chain runs to 431 residues: Histidinol dehydrogenase (431 aa).

Tyr127, Gln189, and Asn212 together coordinate NAD(+). 3 residues coordinate substrate: Ser237, Gln259, and His262. Zn(2+)-binding residues include Gln259 and His262. Catalysis depends on proton acceptor residues Glu326 and His327. The substrate site is built by His327, Asp360, Glu414, and His419. Asp360 contributes to the Zn(2+) binding site. Residue His419 participates in Zn(2+) binding.

The protein belongs to the histidinol dehydrogenase family. It depends on Zn(2+) as a cofactor.

The catalysed reaction is L-histidinol + 2 NAD(+) + H2O = L-histidine + 2 NADH + 3 H(+). The protein operates within amino-acid biosynthesis; L-histidine biosynthesis; L-histidine from 5-phospho-alpha-D-ribose 1-diphosphate: step 9/9. Its function is as follows. Catalyzes the sequential NAD-dependent oxidations of L-histidinol to L-histidinaldehyde and then to L-histidine. The chain is Histidinol dehydrogenase from Xanthomonas campestris pv. campestris (strain 8004).